The chain runs to 140 residues: Nucleoside diphosphate kinase (140 aa).

ATP is bound by residues Lys11, Phe59, Arg87, Thr93, Arg104, and Asn114. Catalysis depends on His117, which acts as the Pros-phosphohistidine intermediate.

Belongs to the NDK family. As to quaternary structure, homotetramer. Mg(2+) is required as a cofactor.

The protein localises to the cytoplasm. The enzyme catalyses a 2'-deoxyribonucleoside 5'-diphosphate + ATP = a 2'-deoxyribonucleoside 5'-triphosphate + ADP. The catalysed reaction is a ribonucleoside 5'-diphosphate + ATP = a ribonucleoside 5'-triphosphate + ADP. Functionally, major role in the synthesis of nucleoside triphosphates other than ATP. The ATP gamma phosphate is transferred to the NDP beta phosphate via a ping-pong mechanism, using a phosphorylated active-site intermediate. This is Nucleoside diphosphate kinase from Beijerinckia indica subsp. indica (strain ATCC 9039 / DSM 1715 / NCIMB 8712).